Here is a 439-residue protein sequence, read N- to C-terminus: Diaminopimelate decarboxylase (439 aa).

Lys66 carries the post-translational modification N6-(pyridoxal phosphate)lysine. Pyridoxal 5'-phosphate-binding positions include Gly248 and 290–293; that span reads EPGR. Substrate contacts are provided by Arg293, Arg330, and Tyr334. Cys361 serves as the catalytic Proton donor. The substrate site is built by Glu362 and Tyr390. Tyr390 provides a ligand contact to pyridoxal 5'-phosphate.

Belongs to the Orn/Lys/Arg decarboxylase class-II family. LysA subfamily. As to quaternary structure, homodimer. It depends on pyridoxal 5'-phosphate as a cofactor.

It catalyses the reaction meso-2,6-diaminopimelate + H(+) = L-lysine + CO2. Its pathway is amino-acid biosynthesis; L-lysine biosynthesis via DAP pathway; L-lysine from DL-2,6-diaminopimelate: step 1/1. Its function is as follows. Specifically catalyzes the decarboxylation of meso-diaminopimelate (meso-DAP) to L-lysine. The protein is Diaminopimelate decarboxylase of Halalkalibacterium halodurans (strain ATCC BAA-125 / DSM 18197 / FERM 7344 / JCM 9153 / C-125) (Bacillus halodurans).